A 347-amino-acid chain; its full sequence is Protein-glutamate methylesterase/protein-glutamine glutaminase 3 (347 aa).

In terms of domain architecture, Response regulatory spans 3-120 (QVFIVDDSAV…KNFLEESEIL (118 aa)). The residue at position 54 (D54) is a 4-aspartylphosphate. The 189-residue stretch at 159–347 (IDTTDKLIAI…SKIVGEVQYF (189 aa)) folds into the CheB-type methylesterase domain. Catalysis depends on residues S171, H197, and D293.

It belongs to the CheB family. Phosphorylated by CheA. Phosphorylation of the N-terminal regulatory domain activates the methylesterase activity.

Its subcellular location is the cytoplasm. The enzyme catalyses [protein]-L-glutamate 5-O-methyl ester + H2O = L-glutamyl-[protein] + methanol + H(+). It carries out the reaction L-glutaminyl-[protein] + H2O = L-glutamyl-[protein] + NH4(+). In terms of biological role, involved in chemotaxis. Part of a chemotaxis signal transduction system that modulates chemotaxis in response to various stimuli. Catalyzes the demethylation of specific methylglutamate residues introduced into the chemoreceptors (methyl-accepting chemotaxis proteins or MCP) by CheR. Also mediates the irreversible deamidation of specific glutamine residues to glutamic acid. This is Protein-glutamate methylesterase/protein-glutamine glutaminase 3 from Leptospira interrogans serogroup Icterohaemorrhagiae serovar copenhageni (strain Fiocruz L1-130).